The primary structure comprises 247 residues: Triosephosphate isomerase (247 aa).

Positions 10 and 12 each coordinate substrate. His94 (electrophile) is an active-site residue. The Proton acceptor role is filled by Glu164.

It belongs to the triosephosphate isomerase family. Homodimer.

The enzyme catalyses D-glyceraldehyde 3-phosphate = dihydroxyacetone phosphate. It functions in the pathway carbohydrate biosynthesis; gluconeogenesis. The protein operates within carbohydrate degradation; glycolysis; D-glyceraldehyde 3-phosphate from glycerone phosphate: step 1/1. The protein is Triosephosphate isomerase (Tpi) of Drosophila melanogaster (Fruit fly).